The primary structure comprises 364 residues: Histidinol-phosphate aminotransferase (364 aa).

Lysine 226 bears the N6-(pyridoxal phosphate)lysine mark.

It belongs to the class-II pyridoxal-phosphate-dependent aminotransferase family. Histidinol-phosphate aminotransferase subfamily. As to quaternary structure, homodimer. It depends on pyridoxal 5'-phosphate as a cofactor.

It catalyses the reaction L-histidinol phosphate + 2-oxoglutarate = 3-(imidazol-4-yl)-2-oxopropyl phosphate + L-glutamate. Its pathway is amino-acid biosynthesis; L-histidine biosynthesis; L-histidine from 5-phospho-alpha-D-ribose 1-diphosphate: step 7/9. The polypeptide is Histidinol-phosphate aminotransferase (Campylobacter jejuni subsp. jejuni serotype O:6 (strain 81116 / NCTC 11828)).